The primary structure comprises 231 residues: MPENLAKAIANPLFPALDSLLRAGRHVSSDDLDNHAFLSDFEPDLALFYQRYHTELVRAPEGFFYLRPRSTSLINRSVLSELDMLVGKVLCFLYLSPERLAHEGIFTNQELYDELLTLVEEKKLMKLVTNRASGSDLDREKLFEKVRTSLRRLRRLGMVITIGDTGKFRITEAVFRFGADVRLGGDVREAQLRLIRDGEAVVHTPEPSQQSLLENPTAEYDEEQTEWEDEA.

Residues Thr-204–Ala-231 are disordered. The segment covering Glu-219 to Ala-231 has biased composition (acidic residues).

Belongs to the MukE family. As to quaternary structure, interacts, and probably forms a ternary complex, with MukF and MukB. The complex formation is stimulated by calcium or magnesium.

Its subcellular location is the cytoplasm. It is found in the nucleoid. Involved in chromosome condensation, segregation and cell cycle progression. May participate in facilitating chromosome segregation by condensation DNA from both sides of a centrally located replisome during cell division. Probably acts via its interaction with MukB and MukF. This is Chromosome partition protein MukE from Vibrio cholerae serotype O1 (strain ATCC 39315 / El Tor Inaba N16961).